The following is a 398-amino-acid chain: MLSALGGLQRCFWAILLLALTVSLLAGFLHKDVRLLMPLLKGQAEGPPITNVMFLKTHKTASSTVLNILFRFAETHNLSVALPAGQRVHLGYPWLFLARYVEGVEEGGPEQRFNIMCNHLRFNLPEVRKVMPNDTFYFSILRNPVFQLESSFIYYKGYVPAFRDVVSLEAFLASPGTYYNESQGLRNAYARNGMWFDLGFDNNAPAEDAYVRARLADVERRFQLVLIAEHFDESMVLLRHLLRWRLDDVVSFPLNLRSPGSVTSLTPEGQERAKRWCALDWRLYQHFNRTFWARLRTELGPRRLRSEVAQLQARQRELQALCVQDGAPKNKSQITDLRLRPYQSGEADILGYSLRPGLDNQTVQLCQRMVTPELQYTARLYTQQFPEKPPKNIPFLGA.

Over 1 to 11 (MLSALGGLQRC) the chain is Cytoplasmic. The chain crosses the membrane as a helical; Signal-anchor for type II membrane protein span at residues 12–29 (FWAILLLALTVSLLAGFL). At 30–398 (HKDVRLLMPL…PPKNIPFLGA (369 aa)) the chain is on the lumenal side. 6 N-linked (GlcNAc...) asparagine glycosylation sites follow: Asn-77, Asn-133, Asn-180, Asn-288, Asn-330, and Asn-360.

Belongs to the galactose-3-O-sulfotransferase family.

It localises to the golgi apparatus. It is found in the golgi stack membrane. Its pathway is protein modification; carbohydrate sulfation. With respect to regulation, strongly inhibited by Cu(2+) and Zn(2+). Functionally, transfers a sulfate group to the hydroxyl group at C3 of non-reducing beta-galactosyl residues. Acts both on type 1 (Gal-beta-1,3-GlcNAc) and type 2 (Gal-beta-1,4-GlcNAc) chains with similar efficiency. The chain is Galactose-3-O-sulfotransferase 2 (GAL3ST2) from Sus scrofa (Pig).